We begin with the raw amino-acid sequence, 303 residues long: 1D-myo-inositol 2-acetamido-2-deoxy-alpha-D-glucopyranoside deacetylase (303 aa).

Residues histidine 15, aspartate 18, and histidine 157 each coordinate Zn(2+).

Belongs to the MshB deacetylase family. Zn(2+) is required as a cofactor.

It catalyses the reaction 1D-myo-inositol 2-acetamido-2-deoxy-alpha-D-glucopyranoside + H2O = 1D-myo-inositol 2-amino-2-deoxy-alpha-D-glucopyranoside + acetate. Catalyzes the deacetylation of 1D-myo-inositol 2-acetamido-2-deoxy-alpha-D-glucopyranoside (GlcNAc-Ins) in the mycothiol biosynthesis pathway. The protein is 1D-myo-inositol 2-acetamido-2-deoxy-alpha-D-glucopyranoside deacetylase of Kribbella flavida (strain DSM 17836 / JCM 10339 / NBRC 14399).